Consider the following 485-residue polypeptide: NADH-quinone oxidoreductase subunit N (485 aa).

14 consecutive transmembrane segments (helical) span residues 8-28 (LIAL…MLSI), 35-55 (FLNA…LWFV), 71-91 (GFAM…CTFA), 105-125 (FYLL…ANHL), 127-147 (SLFL…GYAF), 159-179 (YTIL…LVYA), 203-223 (LLAG…LVPF), 235-255 (PAPV…GVVM), 271-291 (VVLA…ALSQ), 297-317 (LLGY…IALQ), 326-346 (VGVY…VVSL), 373-393 (AAVM…LGFI), 408-430 (WWLV…RVAV), and 455-475 (IVVL…QPLI).

The protein belongs to the complex I subunit 2 family. NDH-1 is composed of 13 different subunits. Subunits NuoA, H, J, K, L, M, N constitute the membrane sector of the complex.

The protein localises to the cell inner membrane. The catalysed reaction is a quinone + NADH + 5 H(+)(in) = a quinol + NAD(+) + 4 H(+)(out). NDH-1 shuttles electrons from NADH, via FMN and iron-sulfur (Fe-S) centers, to quinones in the respiratory chain. The immediate electron acceptor for the enzyme in this species is believed to be ubiquinone. Couples the redox reaction to proton translocation (for every two electrons transferred, four hydrogen ions are translocated across the cytoplasmic membrane), and thus conserves the redox energy in a proton gradient. This is NADH-quinone oxidoreductase subunit N from Escherichia coli O6:K15:H31 (strain 536 / UPEC).